The sequence spans 298 residues: Mitochondrial intermembrane space import and assembly protein 40 (298 aa).

A mitochondrion-targeting transit peptide spans 1–33 (MYRTALRPSQSALRAIRSTTSPSALVSSGARRF). Topologically, residues 34 to 52 (ASTTSAPKKKSTWKGAAVR) are mitochondrial matrix. The chain crosses the membrane as a helical; Signal-anchor for type II membrane protein span at residues 53–69 (WGLAVAAVYYYNTSPIF). The Mitochondrial intermembrane portion of the chain corresponds to 70-298 (SDELPETAGT…TAANNNKKQQ (229 aa)). Residues 101-159 (RQAAEHAAARKAAQAAAKAAATPATPSESVEEQITKAEAEAEAVPEGDSKPRSESTEGV) form a disordered region. Residues 110–121 (RKAAQAAAKAAA) show a composition bias toward low complexity. Disulfide bonds link Cys191-Cys193, Cys202-Cys235, and Cys212-Cys225. One can recognise a CHCH domain in the interval 199–243 (HGPCGEEFKAAFSCFVYSTEEPKGMDCIEKFSHMQDCFRKYPEVY). 2 consecutive short sequence motifs (cx9C motif) follow at residues 202-212 (CGEEFKAAFSC) and 225-235 (CIEKFSHMQDC). A disordered region spans residues 248–298 (ADDEEAERASAAAPAAEGTPAKEEPVENKKEEALEPATHDATAANNNKKQQ). The segment covering 256-266 (ASAAAPAAEGT) has biased composition (low complexity). The segment covering 267–280 (PAKEEPVENKKEEA) has biased composition (basic and acidic residues).

Monomer. The cofactor is Cu(2+). Zn(2+) serves as cofactor.

Its subcellular location is the mitochondrion inner membrane. Its function is as follows. Required for the import and folding of small cysteine-containing proteins (small Tim) in the mitochondrial intermembrane space (IMS). Forms a redox cycle with ERV1 that involves a disulfide relay system. Precursor proteins to be imported into the IMS are translocated in their reduced form into the mitochondria. The oxidized form of MIA40 forms a transient intermolecular disulfide bridge with the reduced precursor protein, resulting in oxidation of the precursor protein that now contains an intramolecular disulfide bond and is able to undergo folding in the IMS. The sequence is that of Mitochondrial intermembrane space import and assembly protein 40 (mia-40) from Neurospora crassa (strain ATCC 24698 / 74-OR23-1A / CBS 708.71 / DSM 1257 / FGSC 987).